We begin with the raw amino-acid sequence, 469 residues long: Trigger factor (469 aa).

The PPIase FKBP-type domain maps to 162–243; sequence GDFVSIDLSA…VKSVKERELP (82 aa). The segment at 438–469 is disordered; the sequence is GPSGEQAAEDSAEESTDAAEGEAAEDADDTDK. Acidic residues predominate over residues 444–469; sequence AAEDSAEESTDAAEGEAAEDADDTDK.

Belongs to the FKBP-type PPIase family. Tig subfamily.

It localises to the cytoplasm. It carries out the reaction [protein]-peptidylproline (omega=180) = [protein]-peptidylproline (omega=0). Involved in protein export. Acts as a chaperone by maintaining the newly synthesized protein in an open conformation. Functions as a peptidyl-prolyl cis-trans isomerase. The protein is Trigger factor of Mycolicibacterium smegmatis (strain ATCC 700084 / mc(2)155) (Mycobacterium smegmatis).